Consider the following 142-residue polypeptide: Transcriptional regulator MraZ (142 aa).

2 consecutive SpoVT-AbrB domains span residues 5 to 47 (EYQH…TINE) and 76 to 119 (ACIV…SREK).

Belongs to the MraZ family. Forms oligomers.

The protein localises to the cytoplasm. Its subcellular location is the nucleoid. This chain is Transcriptional regulator MraZ, found in Clostridium botulinum (strain Eklund 17B / Type B).